The following is a 570-amino-acid chain: Putative periplasmic trehalase (570 aa).

Residues 1–34 (MIPPEIRRSVLLQKAIKLALAGTLLTFASFSATA) form the signal peptide. Substrate contacts are provided by residues arginine 159, 166 to 167 (WD), asparagine 203, 212 to 214 (RSQ), 284 to 286 (RPE), and glycine 317. Residues aspartate 319 and glutamate 503 each act as proton donor/acceptor in the active site. Glutamate 518 lines the substrate pocket. The segment at 544–570 (KPCDSVPSTRPASLSATPTKTPSAATQ) is disordered. Over residues 554–570 (PASLSATPTKTPSAATQ) the composition is skewed to low complexity.

Belongs to the glycosyl hydrolase 37 family. In terms of assembly, monomer.

The protein localises to the periplasm. It catalyses the reaction alpha,alpha-trehalose + H2O = alpha-D-glucose + beta-D-glucose. Its function is as follows. Provides the cells with the ability to utilize trehalose at high osmolarity by splitting it into glucose molecules that can subsequently be taken up by the phosphotransferase-mediated uptake system. The protein is Putative periplasmic trehalase of Salmonella typhi.